A 134-amino-acid chain; its full sequence is FK506-binding protein 2 (134 aa).

A signal peptide spans 1–19; the sequence is MRFSIFSTLLVSLATLSTA. In terms of domain architecture, PPIase FKBP-type spans 39-127; it reads GDTVQMHYKG…IFETELVGID (89 aa). The Prevents secretion from ER motif lies at 131 to 134; sequence KDEL.

It belongs to the FKBP-type PPIase family. FKBP2 subfamily.

The protein resides in the endoplasmic reticulum. The catalysed reaction is [protein]-peptidylproline (omega=180) = [protein]-peptidylproline (omega=0). Inhibited by both FK506 and rapamycin. Functionally, PPIases accelerate the folding of proteins. It catalyzes the cis-trans isomerization of proline imidic peptide bonds in oligopeptides. The polypeptide is FK506-binding protein 2 (fpr2) (Aspergillus oryzae (strain ATCC 42149 / RIB 40) (Yellow koji mold)).